The sequence spans 464 residues: MKYLPLFHNLRGSRVLVVGGGEIALRKSRLLADAGALLRVVAPEIEAQLRELVAASGGECLLRGYAEADLDGCGLIIAATDDEALNAHVSADAHRRCVPVNVVDAPALCSVIFPAIVDRSPLIIAVSSGGDAPVLARLIRAKIETWIPSTYGHLAGLAARFRDQVKGLFPDVQQRRGFWEDVFQGPIADRQLAGQGAEAERLLQAKIDGEAMVTTGEVYLVGAGPGDPDLLTFRALRLMQQADVVLYDRLVAPAILELCRRDAERVYVGKRRADHAVPQDQINQQLVDLAKAGKRVVRLKGGDPFIFGRGGEEIEELAAHGIPFQVVPGITAASGCAAYAGIPLTHRDYAQSVRFVTGHLKDGSTDLPWSDLVAPAQTLVFYMGLVGLPIICEQLIKHGRAAETPAALIQQGTTVNQRVFTGTLADLPRLVAEHEVHAPTLVIVGEVVQLREKLAWFEGAQGQI.

Residues M1–L203 form a precorrin-2 dehydrogenase /sirohydrochlorin ferrochelatase region. NAD(+) is bound by residues E22–I23 and P43–E44. The residue at position 128 (S128) is a Phosphoserine. The tract at residues G216 to I464 is uroporphyrinogen-III C-methyltransferase. P225 contacts S-adenosyl-L-methionine. Residue D248 is the Proton acceptor of the active site. Catalysis depends on K270, which acts as the Proton donor. Residues G301–D303, I306, T331–A332, M383, and G412 each bind S-adenosyl-L-methionine.

It in the N-terminal section; belongs to the precorrin-2 dehydrogenase / sirohydrochlorin ferrochelatase family. This sequence in the C-terminal section; belongs to the precorrin methyltransferase family.

It catalyses the reaction uroporphyrinogen III + 2 S-adenosyl-L-methionine = precorrin-2 + 2 S-adenosyl-L-homocysteine + H(+). It carries out the reaction precorrin-2 + NAD(+) = sirohydrochlorin + NADH + 2 H(+). The enzyme catalyses siroheme + 2 H(+) = sirohydrochlorin + Fe(2+). It participates in cofactor biosynthesis; adenosylcobalamin biosynthesis; precorrin-2 from uroporphyrinogen III: step 1/1. The protein operates within cofactor biosynthesis; adenosylcobalamin biosynthesis; sirohydrochlorin from precorrin-2: step 1/1. Its pathway is porphyrin-containing compound metabolism; siroheme biosynthesis; precorrin-2 from uroporphyrinogen III: step 1/1. It functions in the pathway porphyrin-containing compound metabolism; siroheme biosynthesis; siroheme from sirohydrochlorin: step 1/1. It participates in porphyrin-containing compound metabolism; siroheme biosynthesis; sirohydrochlorin from precorrin-2: step 1/1. Multifunctional enzyme that catalyzes the SAM-dependent methylations of uroporphyrinogen III at position C-2 and C-7 to form precorrin-2 via precorrin-1. Then it catalyzes the NAD-dependent ring dehydrogenation of precorrin-2 to yield sirohydrochlorin. Finally, it catalyzes the ferrochelation of sirohydrochlorin to yield siroheme. This is Siroheme synthase from Pseudomonas fluorescens (strain Pf0-1).